Here is a 513-residue protein sequence, read N- to C-terminus: cAMP-regulated M3R protein (513 aa).

It to D.discoideum protein M3L.

This chain is cAMP-regulated M3R protein (prtB), found in Dictyostelium discoideum (Social amoeba).